A 232-amino-acid polypeptide reads, in one-letter code: 26S proteasome non-ATPase regulatory subunit 10 (232 aa).

ANK repeat units lie at residues aspartate 45–threonine 75, glycine 79–threonine 108, serine 112–lysine 141, threonine 144–serine 173, glutamate 177–isoleucine 206, and aspartate 210–lysine 232.

Its function is as follows. Acts as a chaperone during the assembly of the 26S proteasome, specifically of the 19S regulatory complex (RC). The protein is 26S proteasome non-ATPase regulatory subunit 10 (psmD10) of Dictyostelium discoideum (Social amoeba).